A 1020-amino-acid chain; its full sequence is 26S proteasome non-ATPase regulatory subunit 1 (1020 aa).

Residues Thr279 to Thr322 form a disordered region. The span at Leu281–Glu293 shows a compositional bias: polar residues. The residue at position 291 (Thr291) is a Phosphothreonine. The span at Asp294–Glu307 shows a compositional bias: basic and acidic residues. A phosphoserine mark is found at Ser298, Ser303, and Ser305. The residue at position 310 (Thr310) is a Phosphothreonine. PC repeat units lie at residues Thr418–Tyr452, Gly456–Arg489, Gly491–Glu525, Ala526–Leu560, Gly562–Arg595, Ser596–Arg631, Ala632–Arg664, Gly666–Gln701, Gly702–Ala742, and Gly745–Val777. Disordered stretches follow at residues Gln855 to Arg950 and Phe999 to Asp1020. Composition is skewed to basic and acidic residues over residues Arg858–Glu867 and Lys876–Glu939. Residues Asn1003–Asp1020 are compositionally biased toward acidic residues.

This sequence belongs to the proteasome subunit S1 family.

In terms of biological role, acts as a regulatory subunit of the 26S proteasome which is involved in the ATP-dependent degradation of ubiquitinated proteins. The polypeptide is 26S proteasome non-ATPase regulatory subunit 1 (Rpn2) (Drosophila melanogaster (Fruit fly)).